Here is a 329-residue protein sequence, read N- to C-terminus: 2-oxoglutarate-dependent dioxygenase mpl2 (329 aa).

Residues 183 to 288 (PACPLRLLHY…RYSVVFFFDG (106 aa)) form the Fe2OG dioxygenase domain. Fe cation-binding residues include His-211, Asp-213, and His-269. Arg-279 serves as a coordination point for 2-oxoglutarate.

The protein belongs to the iron/ascorbate-dependent oxidoreductase family. Fe(2+) serves as cofactor.

It participates in mycotoxin biosynthesis. 2-oxoglutarate-dependent dioxygenase; part of the gene cluster that mediates the biosynthesis of the mycotoxin citrinin, a hepato-nephrotoxic compound to humans due to inhibition of respiration complex III. The pathway begins with the synthesis of a keto-aldehyde intermediate by the citrinin PKS (pksCT) from successive condensations of 4 malonyl-CoA units, presumably with a simple acetyl-CoA starter unit. Release of the keto-aldehyde intermediate is consistent with the presence of the C-terminal reductive release domain. Mp11 collaborates with pksCT by catalyzing the hydrolysis of ACP-bound acyl intermediates to free the ACP from stalled intermediates. Mpl2 then catalyzes the oxidation of the C-12 methyl of the ketone intermediate to an alcohol intermediate which is further oxidized by the oxidoreductase mpl7 to produce a bisaldehyde intermediate. The fourth catalytic step is catalyzed by the mpl4 aldehyde dehydrogenase. The final transformation is the reduction of C-3 by mpl6 to provide the chemically stable citrinin nucleus. The chain is 2-oxoglutarate-dependent dioxygenase mpl2 from Monascus purpureus (Red mold).